An 88-amino-acid polypeptide reads, in one-letter code: Small ribosomal subunit protein uS15 (88 aa).

Belongs to the universal ribosomal protein uS15 family. As to quaternary structure, part of the 30S ribosomal subunit. Forms a bridge to the 50S subunit in the 70S ribosome, contacting the 23S rRNA.

In terms of biological role, one of the primary rRNA binding proteins, it binds directly to 16S rRNA where it helps nucleate assembly of the platform of the 30S subunit by binding and bridging several RNA helices of the 16S rRNA. Functionally, forms an intersubunit bridge (bridge B4) with the 23S rRNA of the 50S subunit in the ribosome. This chain is Small ribosomal subunit protein uS15, found in Mesomycoplasma hyopneumoniae (strain 232) (Mycoplasma hyopneumoniae).